Consider the following 238-residue polypeptide: Fatty acid metabolism regulator protein (238 aa).

Residues 6 to 74 (KGPASFAEKY…HGKPTRVNNF (69 aa)) enclose the HTH gntR-type domain. A DNA-binding region (H-T-H motif) is located at residues 34 to 53 (ERELSELIGVTRTTLREVLQ).

Homodimer.

It is found in the cytoplasm. Functionally, multifunctional regulator of fatty acid metabolism. The polypeptide is Fatty acid metabolism regulator protein (Shewanella putrefaciens (strain CN-32 / ATCC BAA-453)).